The following is a 249-amino-acid chain: Triosephosphate isomerase (249 aa).

12 to 14 contacts substrate; sequence NWK. The active-site Electrophile is histidine 96. Catalysis depends on glutamate 166, which acts as the Proton acceptor. Substrate-binding positions include glycine 172, serine 211, and 232–233; that span reads GG.

This sequence belongs to the triosephosphate isomerase family. As to quaternary structure, homodimer.

It is found in the cytoplasm. The enzyme catalyses D-glyceraldehyde 3-phosphate = dihydroxyacetone phosphate. It participates in carbohydrate biosynthesis; gluconeogenesis. It functions in the pathway carbohydrate degradation; glycolysis; D-glyceraldehyde 3-phosphate from glycerone phosphate: step 1/1. Its function is as follows. Involved in the gluconeogenesis. Catalyzes stereospecifically the conversion of dihydroxyacetone phosphate (DHAP) to D-glyceraldehyde-3-phosphate (G3P). In Xanthobacter flavus, this protein is Triosephosphate isomerase.